Consider the following 820-residue polypeptide: Phenylalanine--tRNA ligase beta subunit (820 aa).

Positions 42–154 (KGGLEGLVIG…AEAVPGTLAK (113 aa)) constitute a tRNA-binding domain. Positions 413–489 (PQDFMVELSY…RIYGYNNVEI (77 aa)) constitute a B5 domain. Mg(2+) is bound by residues D467, D473, E476, and D477. Residues 727 to 820 (SKFPAVKRDL…LEDKLNAKLR (94 aa)) form the FDX-ACB domain.

This sequence belongs to the phenylalanyl-tRNA synthetase beta subunit family. Type 1 subfamily. Tetramer of two alpha and two beta subunits. It depends on Mg(2+) as a cofactor.

The protein resides in the cytoplasm. The enzyme catalyses tRNA(Phe) + L-phenylalanine + ATP = L-phenylalanyl-tRNA(Phe) + AMP + diphosphate + H(+). In Bacteroides thetaiotaomicron (strain ATCC 29148 / DSM 2079 / JCM 5827 / CCUG 10774 / NCTC 10582 / VPI-5482 / E50), this protein is Phenylalanine--tRNA ligase beta subunit.